The chain runs to 636 residues: C-terminal binding protein AN (636 aa).

The segment at 1-21 is disordered; it reads MSKIRSSATMPHRDQPSPASP. Residues Ser91, 147 to 148, 169 to 174, Asp193, 231 to 237, 258 to 260, Asp284, and 307 to 311 contribute to the NAD(+) site; these read WL, VGRSVS, CALTNDT, TGS, and RSADY. Positions 341–489 are disordered; the sequence is VSDEEVEESE…PLEVMQESSP (149 aa). Acidic residues predominate over residues 342-357; it reads SDEEVEESEASEEEEQ. Residues 369-384 show a composition bias toward polar residues; that stretch reads ESTSRQQGESTLTSTE. The span at 385 to 395 shows a compositional bias: basic and acidic residues; that stretch reads IVRREASELKE. Residues 398–409 show a composition bias toward polar residues; it reads SPGQQHVSQNTA. Residues 417–429 are compositionally biased toward basic residues; the sequence is SRSGKKAKKRHSQ. The segment covering 430-445 has biased composition (polar residues); it reads QKYMQKTDGSSGLNEE. The segment covering 470–480 has biased composition (basic and acidic residues); sequence SPEDSRSRKTP.

It belongs to the D-isomer specific 2-hydroxyacid dehydrogenase family. Plant AN subfamily. Homodimer. Interacts with KCBP and SUB (via intra-cellular domain); AN is not required for the correct subcellular localization and recycling of SUB. Binds to SOKs proteins polymers (e.g. SOK1, SOK2, SOK3 and SOK4). Interacts with IPGA1 on microtubule upon mechanical stress to regulate microtubule organization. NAD(+) is required as a cofactor. As to expression, expressed in cotyledons, leaves, roots, stems and floral buds.

The protein localises to the cytoplasm. The protein resides in the golgi apparatus. It localises to the trans-Golgi network. Its subcellular location is the cytoskeleton. Functionally, involved in controlling the equilibrium between tubular and stacked structures in the Golgi complex. Required for cortical microtubules (MTs) arrangement that confers cell shape. Cooperatively with IPGA1, negatively regulates cortical microtubules (CMTs) organization in response to mechanical stress and modulates pavement cells morphogenesis leading to puzzle shape, probably in an AAA1/KTN1-dependent manner. Regulates the width of leaves by controlling the polar elongation of leaf cells. Involved in the regulation of trichome branching. Seems to not be able to regulate gene transcription. Regulates epidermal cell divisions and elongation in a non-cell-autonomous manner (regulated by subepidermal cells), but regulates epidermal cell polarity, shape, trichome branching and elongation in a cell-autonomous manner. Negatively regulates growth in the petiole elongation. Prevents lipid peroxidation as a result of abiotic stress response. Is involved in the SUB-dependent signaling mechanism and may act in a membrane trafficking event around the trans-Golgi network. This chain is C-terminal binding protein AN, found in Arabidopsis thaliana (Mouse-ear cress).